Reading from the N-terminus, the 351-residue chain is Histidinol-phosphate aminotransferase 2 (351 aa).

Lys-210 is subject to N6-(pyridoxal phosphate)lysine.

The protein belongs to the class-II pyridoxal-phosphate-dependent aminotransferase family. Histidinol-phosphate aminotransferase subfamily. In terms of assembly, homodimer. Requires pyridoxal 5'-phosphate as cofactor.

It catalyses the reaction L-histidinol phosphate + 2-oxoglutarate = 3-(imidazol-4-yl)-2-oxopropyl phosphate + L-glutamate. It functions in the pathway amino-acid biosynthesis; L-histidine biosynthesis; L-histidine from 5-phospho-alpha-D-ribose 1-diphosphate: step 7/9. This Rhizobium meliloti (strain 1021) (Ensifer meliloti) protein is Histidinol-phosphate aminotransferase 2 (hisC2).